Consider the following 71-residue polypeptide: Large ribosomal subunit protein bL31 (71 aa).

Cys-16, Cys-18, Cys-37, and Cys-40 together coordinate Zn(2+).

The protein belongs to the bacterial ribosomal protein bL31 family. Type A subfamily. Part of the 50S ribosomal subunit. Zn(2+) is required as a cofactor.

Binds the 23S rRNA. The protein is Large ribosomal subunit protein bL31 of Pseudomonas entomophila (strain L48).